Consider the following 392-residue polypeptide: Protein O-glucosyltransferase 1 (392 aa).

Residues 1–23 (MEWWASSPLRLWLLLFLLPSAQG) form the signal peptide. N-linked (GlcNAc...) asparagine glycans are attached at residues Asn-40 and Asn-53. 4 cysteine pairs are disulfide-bonded: Cys-49–Cys-56, Cys-54–Cys-357, Cys-102–Cys-108, and Cys-263–Cys-286. Residues 103-107 (MFPSR) are interaction with the consensus sequence C-X-S-X-[PA]-C in peptide substrates. Asp-133 (proton donor/acceptor) is an active-site residue. The segment at 172–178 (AVWPIYP) is interaction with the consensus sequence C-X-S-X-[PA]-C in peptide substrates. Tyr-177 serves as a coordination point for UDP-alpha-D-glucose. N-linked (GlcNAc...) asparagine glycosylation is present at Asn-204. UDP-alpha-D-glucose contacts are provided by residues Ser-212, Arg-218, and 274–279 (VAASFR). Asn-373 is a glycosylation site (N-linked (GlcNAc...) asparagine). A Prevents secretion from ER motif is present at residues 389-392 (KTEL).

The protein belongs to the glycosyltransferase 90 family. As to expression, expressed in most adult tissues at different intensities. Abundantly expressed in liver. Expressed also in brain, heart, skeletal muscle, spleen, kidney, placenta, lung and peripheral blood leukocyte. Not detectable in colon, thymus and small intestine. Expressed in the epidermis, especially in the upper parts, stratum spinosum and stratum granulosum (at protein level).

It is found in the endoplasmic reticulum lumen. It catalyses the reaction L-seryl-[EGF-like domain protein] + UDP-alpha-D-xylose = 3-O-(beta-D-xylosyl)-L-seryl-[EGF-like domain protein] + UDP + H(+). The enzyme catalyses L-seryl-[EGF-like domain protein] + UDP-alpha-D-glucose = 3-O-(beta-D-glucosyl)-L-seryl-[EGF-like domain protein] + UDP + H(+). Its pathway is protein modification; protein glycosylation. In terms of biological role, dual specificity glycosyltransferase that catalyzes the transfer of glucose and xylose from UDP-glucose and UDP-xylose, respectively, to a serine residue found in the consensus sequence of C-X-S-X-P-C. Specifically targets extracellular EGF repeats of protein such as CRB2, F7, F9 and NOTCH2. Acts as a positive regulator of Notch signaling by mediating O-glucosylation of Notch, leading to regulate muscle development. Notch glucosylation does not affect Notch ligand binding. Required during early development to promote gastrulation: acts by mediating O-glucosylation of CRB2, which is required for CRB2 localization to the cell membrane. The polypeptide is Protein O-glucosyltransferase 1 (Homo sapiens (Human)).